Consider the following 253-residue polypeptide: Sulfate transporter CysZ (253 aa).

4 helical membrane passes run 31–51 (FVIL…WWLF), 75–95 (LLWP…FSTI), 151–171 (IVLL…PVLW), and 222–242 (IPLL…AMWV).

This sequence belongs to the CysZ family.

The protein resides in the cell inner membrane. In terms of biological role, high affinity, high specificity proton-dependent sulfate transporter, which mediates sulfate uptake. Provides the sulfur source for the cysteine synthesis pathway. This Escherichia coli O139:H28 (strain E24377A / ETEC) protein is Sulfate transporter CysZ.